The sequence spans 174 residues: Vimentin-type intermediate filament-associated coiled-coil protein (174 aa).

A coiled-coil region spans residues 7 to 97 (LQIREANAHL…DQRDQMIQQL (91 aa)). The disordered stretch occupies residues 128 to 174 (GPLPASHSHRAQLLPDGPGPPLGNNMGKEEGQDDQDDQQPAVFGTTV).

The protein localises to the cytoplasm. This Mus musculus (Mouse) protein is Vimentin-type intermediate filament-associated coiled-coil protein (Vmac).